The sequence spans 65 residues: Photosystem II reaction center protein J (65 aa).

Residues 1 to 17 are compositionally biased toward basic and acidic residues; it reads MSTKLKGPDGRIPDRLP. Residues 1–20 form a disordered region; it reads MSTKLKGPDGRIPDRLPDGT. The chain crosses the membrane as a helical span at residues 36–56; the sequence is LWLVATVGGMAVLSVLGLFFF.

It belongs to the PsbJ family. PSII is composed of 1 copy each of membrane proteins PsbA, PsbB, PsbC, PsbD, PsbE, PsbF, PsbH, PsbI, PsbJ, PsbK, PsbL, PsbM, PsbT, PsbX, PsbY, Psb30/Ycf12, peripheral proteins PsbO, CyanoQ (PsbQ), PsbU, PsbV and a large number of cofactors. It forms dimeric complexes.

The protein localises to the cellular thylakoid membrane. Its function is as follows. One of the components of the core complex of photosystem II (PSII). PSII is a light-driven water:plastoquinone oxidoreductase that uses light energy to abstract electrons from H(2)O, generating O(2) and a proton gradient subsequently used for ATP formation. It consists of a core antenna complex that captures photons, and an electron transfer chain that converts photonic excitation into a charge separation. This is Photosystem II reaction center protein J from Prochlorococcus marinus (strain MIT 9303).